The following is a 1203-amino-acid chain: DNA-directed RNA polymerase subunit beta (1203 aa).

Residues 1167–1203 are disordered; it reads LSKYAQQQEEQRKAAAQTDESKTAPATKNESQPNTQD. Positions 1190–1203 are enriched in polar residues; sequence APATKNESQPNTQD.

Belongs to the RNA polymerase beta chain family. In terms of assembly, the RNAP catalytic core consists of 2 alpha, 1 beta, 1 beta' and 1 omega subunit. When a sigma factor is associated with the core the holoenzyme is formed, which can initiate transcription.

The catalysed reaction is RNA(n) + a ribonucleoside 5'-triphosphate = RNA(n+1) + diphosphate. DNA-dependent RNA polymerase catalyzes the transcription of DNA into RNA using the four ribonucleoside triphosphates as substrates. This Levilactobacillus brevis (strain ATCC 367 / BCRC 12310 / CIP 105137 / JCM 1170 / LMG 11437 / NCIMB 947 / NCTC 947) (Lactobacillus brevis) protein is DNA-directed RNA polymerase subunit beta.